A 316-amino-acid chain; its full sequence is Glutamyl endopeptidase (316 aa).

The first 30 residues, 1–30 (MVSKKSVKRGLITGLIGISIYSLGMHPAQA), serve as a signal peptide directing secretion. Positions 31 to 94 (APSPHTPVSS…SPAKAPYSIK (64 aa)) are excised as a propeptide. A disulfide bridge links C126 with C142. Residues H141 and S261 each act as charge relay system in the active site. C275 and C279 form a disulfide bridge.

Belongs to the peptidase S1B family.

The protein resides in the secreted. It carries out the reaction Preferential cleavage: Glu-|-Xaa, Asp-|-Xaa.. Its function is as follows. Specific for hydrolysis of peptide bonds on the carboxyl side of acidic amino acid residues, with a strong preference for Glu. In Bacillus licheniformis (strain ATCC 14580 / DSM 13 / JCM 2505 / CCUG 7422 / NBRC 12200 / NCIMB 9375 / NCTC 10341 / NRRL NRS-1264 / Gibson 46), this protein is Glutamyl endopeptidase (blaSE).